The following is a 179-amino-acid chain: uncharacterized protein (179 aa).

Its subcellular location is the virion. This is an uncharacterized protein from Acanthamoeba polyphaga (Amoeba).